Consider the following 574-residue polypeptide: Septation ring formation regulator EzrA (574 aa).

Topologically, residues 1–7 are extracellular; sequence MSSGIIL. Residues 8–26 form a helical membrane-spanning segment; the sequence is LIVAIVLLVIIAYLVGVII. The Cytoplasmic portion of the chain corresponds to 27-574; the sequence is RKRNDSLITS…YEKTREHIRF (548 aa). 3 coiled-coil regions span residues 102–141, 274–350, and 459–520; these read NFIR…EEKN, ELVT…ETES, and QLEA…SFEA.

This sequence belongs to the EzrA family.

The protein resides in the cell membrane. Negative regulator of FtsZ ring formation; modulates the frequency and position of FtsZ ring formation. Inhibits FtsZ ring formation at polar sites. Interacts either with FtsZ or with one of its binding partners to promote depolymerization. The polypeptide is Septation ring formation regulator EzrA (Streptococcus pyogenes serotype M3 (strain SSI-1)).